Consider the following 341-residue polypeptide: Phosphoribosylformylglycinamidine cyclo-ligase (341 aa).

This sequence belongs to the AIR synthase family.

The protein localises to the cytoplasm. It catalyses the reaction 2-formamido-N(1)-(5-O-phospho-beta-D-ribosyl)acetamidine + ATP = 5-amino-1-(5-phospho-beta-D-ribosyl)imidazole + ADP + phosphate + H(+). It participates in purine metabolism; IMP biosynthesis via de novo pathway; 5-amino-1-(5-phospho-D-ribosyl)imidazole from N(2)-formyl-N(1)-(5-phospho-D-ribosyl)glycinamide: step 2/2. This Lachnoclostridium phytofermentans (strain ATCC 700394 / DSM 18823 / ISDg) (Clostridium phytofermentans) protein is Phosphoribosylformylglycinamidine cyclo-ligase.